The following is a 199-amino-acid chain: Crossover junction endodeoxyribonuclease RuvC (199 aa).

Catalysis depends on residues Asp-7, Glu-68, and Asp-141. The Mg(2+) site is built by Asp-7, Glu-68, and Asp-141.

This sequence belongs to the RuvC family. Homodimer which binds Holliday junction (HJ) DNA. The HJ becomes 2-fold symmetrical on binding to RuvC with unstacked arms; it has a different conformation from HJ DNA in complex with RuvA. In the full resolvosome a probable DNA-RuvA(4)-RuvB(12)-RuvC(2) complex forms which resolves the HJ. Mg(2+) is required as a cofactor.

It is found in the cytoplasm. It catalyses the reaction Endonucleolytic cleavage at a junction such as a reciprocal single-stranded crossover between two homologous DNA duplexes (Holliday junction).. Functionally, the RuvA-RuvB-RuvC complex processes Holliday junction (HJ) DNA during genetic recombination and DNA repair. Endonuclease that resolves HJ intermediates. Cleaves cruciform DNA by making single-stranded nicks across the HJ at symmetrical positions within the homologous arms, yielding a 5'-phosphate and a 3'-hydroxyl group; requires a central core of homology in the junction. The consensus cleavage sequence is 5'-(A/T)TT(C/G)-3'. Cleavage occurs on the 3'-side of the TT dinucleotide at the point of strand exchange. HJ branch migration catalyzed by RuvA-RuvB allows RuvC to scan DNA until it finds its consensus sequence, where it cleaves and resolves the cruciform DNA. This is Crossover junction endodeoxyribonuclease RuvC from Saccharopolyspora erythraea (strain ATCC 11635 / DSM 40517 / JCM 4748 / NBRC 13426 / NCIMB 8594 / NRRL 2338).